Here is a 265-residue protein sequence, read N- to C-terminus: Secreted RxLR effector protein 16 (265 aa).

The N-terminal stretch at 1–19 (MRGAFYIAIALLIVRSRTA) is a signal peptide. Positions 46–61 (RYLRGGLALSATNEER) match the RxLR-dEER motif. N-linked (GlcNAc...) asparagine glycans are attached at residues Asn170, Asn219, and Asn240.

It belongs to the RxLR effector family. Post-translationally, N-glycosylated. The putative N-glycosylation site at position 240 is essential for cell death-inducing activity.

Its subcellular location is the secreted. It is found in the host nucleus. Functionally, effector that acts as an elicitor that induces cell death and promotes ROS accumulation in Nicotian benthamiana. RxLR16-triggered cell death is dependent on SGT1, HSP90 and RAR1, but independent of the somatic embryogenesis receptor-like kinase SERK3/BAK1, indicating that it acts independently of the detection of cell surface pattern recognition receptors. Enhances the expressional levels of defense-associated genes involved in the salicylic acid-, jasmonate acid-, and ethylene-mediated signal transduction, resulting in disease resistance. However, as some other Plasmopara viticola RxLR effectors including RxLR1, RxLR10, RxLR30 and RxLR25, can suppress defense responses and disease resistance induced by RxLR16, it may not trigger host cell death or immune responses during physiological infection under natural conditions. This Plasmopara viticola (Downy mildew of grapevine) protein is Secreted RxLR effector protein 16.